Here is a 305-residue protein sequence, read N- to C-terminus: HTH-type transcriptional regulator KdgR (305 aa).

Positions 55-116 constitute an HTH iclR-type domain; the sequence is VSSVLKVFGI…GESEKYSLTL (62 aa). A DNA-binding region (H-T-H motif) is located at residues 76–95; it reads ITELSQRVMMSKSTVYRFLQ. The IclR-ED domain occupies 131-300; the sequence is LIRSADIQMR…ARNISDQMGY (170 aa).

Homodimer.

It localises to the cytoplasm. In terms of biological role, transcriptional repressor that negatively regulates the expression of genes involved in pectinolysis and in pectinase secretion. Controls genes involved in pectin catabolism, including the pectinase genes (pelA, pelB, pelC, pelE), genes involved in pectin catabolism (kdgT, ogl, kduI-kdgF) and the outT gene involved in pectinase secretion. Acts by binding directly to KdgR binding sites (KdgR-box) in the gene operator/promoter region. In Dickeya chrysanthemi (Pectobacterium chrysanthemi), this protein is HTH-type transcriptional regulator KdgR.